The sequence spans 392 residues: Protein RecA (392 aa).

The interval 1–21 (MALETKPAQDPATEIKHELDP) is disordered. 83–90 (GPESSGKT) contacts ATP. A disordered region spans residues 372 to 392 (DAAKDTKATAAPAAKSSRAKA). The span at 379 to 392 (ATAAPAAKSSRAKA) shows a compositional bias: low complexity.

The protein belongs to the RecA family.

It localises to the cytoplasm. Can catalyze the hydrolysis of ATP in the presence of single-stranded DNA, the ATP-dependent uptake of single-stranded DNA by duplex DNA, and the ATP-dependent hybridization of homologous single-stranded DNAs. It interacts with LexA causing its activation and leading to its autocatalytic cleavage. The polypeptide is Protein RecA (Bifidobacterium breve).